Reading from the N-terminus, the 216-residue chain is Penicillin-binding protein activator LpoB (216 aa).

The first 20 residues, 1–20 (MIKNLSRYALVTAFALFLSG), serve as a signal peptide directing secretion. Residue cysteine 21 is the site of N-palmitoyl cysteine attachment. Cysteine 21 is lipidated: S-diacylglycerol cysteine. Residues 28–77 (QPAPVDEAKPGTEQPAQPTQPVPTVPSVPTVPAQPGPIEHPDQTSQPAPR) are disordered.

The protein belongs to the LpoB family. As to quaternary structure, interacts with PBP1b.

It is found in the cell outer membrane. Functionally, regulator of peptidoglycan synthesis that is essential for the function of penicillin-binding protein 1B (PBP1b). This chain is Penicillin-binding protein activator LpoB, found in Enterobacter sp. (strain 638).